A 1113-amino-acid chain; its full sequence is Coiled-coil domain-containing protein 158 (1113 aa).

Residues 1-14 (MESKAWESNNEDLL) show a composition bias toward polar residues. The interval 1-26 (MESKAWESNNEDLLSSSGVTSNGGSS) is disordered. Residues 15–26 (SSSGVTSNGGSS) show a composition bias toward low complexity. Coiled coils occupy residues 72 to 183 (GKEH…LSHE) and 243 to 833 (VEDQ…QEQE). Disordered stretches follow at residues 848–902 (LQGP…DPTR) and 955–1062 (CHRS…IETT). 5 stretches are compositionally biased toward polar residues: residues 867–894 (ASVT…TKAN), 955–974 (CHRS…SSET), 994–1017 (FTFT…SSPK), 1024–1040 (LLTS…SQYR), and 1053–1062 (DSQSPPIETT). The stretch at 1061-1113 (TTGKTCRKLQNRLESLQTLVEDLQLKNQAMSSMIRNQEKRIQKVKDQEKMLLK) forms a coiled coil.

The chain is Coiled-coil domain-containing protein 158 (CCDC158) from Homo sapiens (Human).